A 159-amino-acid chain; its full sequence is Protein-export protein SecB (159 aa).

It belongs to the SecB family. As to quaternary structure, homotetramer, a dimer of dimers. One homotetramer interacts with 1 SecA dimer.

It localises to the cytoplasm. Its function is as follows. One of the proteins required for the normal export of preproteins out of the cell cytoplasm. It is a molecular chaperone that binds to a subset of precursor proteins, maintaining them in a translocation-competent state. It also specifically binds to its receptor SecA. This chain is Protein-export protein SecB, found in Nitrobacter winogradskyi (strain ATCC 25391 / DSM 10237 / CIP 104748 / NCIMB 11846 / Nb-255).